The primary structure comprises 190 residues: MDNQFIFQYSWEILPKKWVHKMKRSEHGNRFYTNTDYLFPLLCFLKWHTYTRVQVLIDICGVDYPSRKRRFEVVYNLLSTRYNSRIRVQTSADEVTRISSVVSLFPSAGWWEREVWDMFGVSFINHPDLRRILTDYGFEGHPLRKDFPLSGYVEVRYDDPEKRVVSEPIEMTQEFRYFDFASPWEQRSDG.

The protein belongs to the complex I 30 kDa subunit family. Complex I is composed of about 45 different subunits. This is a component of the iron-sulfur (IP) fragment of the enzyme.

The protein resides in the mitochondrion inner membrane. It carries out the reaction a ubiquinone + NADH + 5 H(+)(in) = a ubiquinol + NAD(+) + 4 H(+)(out). In terms of biological role, core subunit of the mitochondrial membrane respiratory chain NADH dehydrogenase (Complex I) that is believed to belong to the minimal assembly required for catalysis. Complex I functions in the transfer of electrons from NADH to the respiratory chain. The immediate electron acceptor for the enzyme is believed to be ubiquinone. This Oryza sativa subsp. japonica (Rice) protein is NADH dehydrogenase [ubiquinone] iron-sulfur protein 3 (NAD9).